The sequence spans 197 residues: Small ribosomal subunit protein uS5 (197 aa).

Residues 1 to 27 are disordered; it reads MAEREQRGGRDQRGGGRERKEREERDS. Residues 29–92 form the S5 DRBM domain; that stretch reads FVDKLVHINR…ESAKRNLTRV (64 aa).

This sequence belongs to the universal ribosomal protein uS5 family. As to quaternary structure, part of the 30S ribosomal subunit. Contacts proteins S4 and S8.

Its function is as follows. With S4 and S12 plays an important role in translational accuracy. Functionally, located at the back of the 30S subunit body where it stabilizes the conformation of the head with respect to the body. This is Small ribosomal subunit protein uS5 from Bradyrhizobium diazoefficiens (strain JCM 10833 / BCRC 13528 / IAM 13628 / NBRC 14792 / USDA 110).